Here is a 505-residue protein sequence, read N- to C-terminus: Tyrosine-protein kinase isoform SRK1 (505 aa).

Composition is skewed to polar residues over residues 1–10 (MGSCCSSQDG) and 18–31 (AGST…SQSV). The segment at 1-53 (MGSCCSSQDGDGNGKATAGSTVDSHELSQSVKGKIKQPEPKPKPPPQVPPAQD) is disordered. The SH3 domain occupies 54-116 (VKYPIYVGKY…PSNYVAEYKS (63 aa)). Residues 122 to 214 (WFLGKIKRVE…GLCCKLLYPC (93 aa)) enclose the SH2 domain. The Protein kinase domain occupies 240 to 493 (IKLLRRLGAG…TLQWQLEEFF (254 aa)). ATP contacts are provided by residues 246–254 (LGAGQFGEV) and K268. The Proton acceptor role is filled by D359.

Belongs to the protein kinase superfamily. Tyr protein kinase family. SRC subfamily.

The protein localises to the cytoplasm. The catalysed reaction is L-tyrosyl-[protein] + ATP = O-phospho-L-tyrosyl-[protein] + ADP + H(+). In Spongilla lacustris (Freshwater sponge), this protein is Tyrosine-protein kinase isoform SRK1 (SRK1).